The chain runs to 312 residues: Ribosomal protein L11 methyltransferase (312 aa).

S-adenosyl-L-methionine-binding residues include T162, G183, D205, and N248.

Belongs to the methyltransferase superfamily. PrmA family.

The protein localises to the cytoplasm. The enzyme catalyses L-lysyl-[protein] + 3 S-adenosyl-L-methionine = N(6),N(6),N(6)-trimethyl-L-lysyl-[protein] + 3 S-adenosyl-L-homocysteine + 3 H(+). Its function is as follows. Methylates ribosomal protein L11. The chain is Ribosomal protein L11 methyltransferase from Bacillus cereus (strain Q1).